Here is a 269-residue protein sequence, read N- to C-terminus: Formamidopyrimidine-DNA glycosylase (269 aa).

P2 acts as the Schiff-base intermediate with DNA in catalysis. The active-site Proton donor is the E3. The Proton donor; for beta-elimination activity role is filled by K58. The DNA site is built by H91, R110, and K150. The FPG-type zinc-finger motif lies at S235–T269. R259 functions as the Proton donor; for delta-elimination activity in the catalytic mechanism.

The protein belongs to the FPG family. As to quaternary structure, monomer. The cofactor is Zn(2+).

It catalyses the reaction Hydrolysis of DNA containing ring-opened 7-methylguanine residues, releasing 2,6-diamino-4-hydroxy-5-(N-methyl)formamidopyrimidine.. The catalysed reaction is 2'-deoxyribonucleotide-(2'-deoxyribose 5'-phosphate)-2'-deoxyribonucleotide-DNA = a 3'-end 2'-deoxyribonucleotide-(2,3-dehydro-2,3-deoxyribose 5'-phosphate)-DNA + a 5'-end 5'-phospho-2'-deoxyribonucleoside-DNA + H(+). Its function is as follows. Involved in base excision repair of DNA damaged by oxidation or by mutagenic agents. Acts as a DNA glycosylase that recognizes and removes damaged bases. Has a preference for oxidized purines, such as 7,8-dihydro-8-oxoguanine (8-oxoG). Has AP (apurinic/apyrimidinic) lyase activity and introduces nicks in the DNA strand. Cleaves the DNA backbone by beta-delta elimination to generate a single-strand break at the site of the removed base with both 3'- and 5'-phosphates. The chain is Formamidopyrimidine-DNA glycosylase from Vesicomyosocius okutanii subsp. Calyptogena okutanii (strain HA).